The primary structure comprises 194 residues: uncharacterized protein (194 aa).

The signal sequence occupies residues 1 to 15 (MFVLSIALLSCTTLC). A PAN domain is found at 49–134 (CPQGLHADAI…KATYYEKIRC (86 aa)). 2 cysteine pairs are disulfide-bonded: cysteine 49–cysteine 134 and cysteine 79–cysteine 106.

This is an uncharacterized protein from Caenorhabditis elegans.